A 331-amino-acid polypeptide reads, in one-letter code: Protein RecA (331 aa).

67–74 (GPESSGKT) is a binding site for ATP.

Belongs to the RecA family.

Its subcellular location is the cytoplasm. Functionally, can catalyze the hydrolysis of ATP in the presence of single-stranded DNA, the ATP-dependent uptake of single-stranded DNA by duplex DNA, and the ATP-dependent hybridization of homologous single-stranded DNAs. It interacts with LexA causing its activation and leading to its autocatalytic cleavage. The sequence is that of Protein RecA from Wigglesworthia glossinidia brevipalpis.